The primary structure comprises 1011 residues: Beta-galactosidase A (1011 aa).

Positions 1–19 are cleaved as a signal peptide; sequence MKLLSSWVVAALAAQAAGA. Substrate-binding positions include tyrosine 96, 140-142, and asparagine 199; that span reads NAE. The active-site Proton donor is glutamate 200. Intrachain disulfides connect cysteine 205–cysteine 206 and cysteine 267–cysteine 316. Catalysis depends on glutamate 299, which acts as the Nucleophile. Tyrosine 365 is a binding site for substrate. 7 N-linked (GlcNAc...) asparagine glycosylation sites follow: asparagine 374, asparagine 456, asparagine 625, asparagine 707, asparagine 763, asparagine 780, and asparagine 917.

This sequence belongs to the glycosyl hydrolase 35 family. In terms of assembly, monomer.

It is found in the secreted. It catalyses the reaction Hydrolysis of terminal non-reducing beta-D-galactose residues in beta-D-galactosides.. In terms of biological role, cleaves beta-linked terminal galactosyl residues from gangliosides, glycoproteins, and glycosaminoglycans. Has high in vitro transglycosylation activity with p-nitrophenyl-beta-D-galactopyranoside, methyl-beta-D-galactopyranoside or lactose as a donor and galactose as an acceptor. This Penicillium sp protein is Beta-galactosidase A (lacA).